Reading from the N-terminus, the 66-residue chain is Large ribosomal subunit protein bL33c (66 aa).

This sequence belongs to the bacterial ribosomal protein bL33 family.

Its subcellular location is the plastid. The protein resides in the chloroplast. The protein is Large ribosomal subunit protein bL33c of Manihot esculenta (Cassava).